The chain runs to 181 residues: Inorganic pyrophosphatase (181 aa).

Positions 16, 30, and 42 each coordinate substrate. Positions 52, 57, and 89 each coordinate Mg(2+). Tyr126 contacts substrate.

The protein belongs to the PPase family. As to quaternary structure, homohexamer. Mg(2+) is required as a cofactor.

It is found in the cytoplasm. The enzyme catalyses diphosphate + H2O = 2 phosphate + H(+). Its function is as follows. Catalyzes the hydrolysis of inorganic pyrophosphate (PPi) forming two phosphate ions. This Ureaplasma parvum serovar 3 (strain ATCC 700970) protein is Inorganic pyrophosphatase.